The chain runs to 397 residues: Staphylopine export protein (397 aa).

Helical transmembrane passes span 12–32 (LYILTLMFFSANAILNVFIPL), 38–58 (GATNTVIGIVMGAYMLTAMVF), 77–97 (IILIINAIALIIYGFTGLEGY), 102–122 (VMQGVCTAFFSMSLQLGIIDA), 134–154 (LYSLFSTIPNLIGPLVAVGIW), 158–178 (NISLFAIVIIFIALTTTFFGY), 217–237 (GIIMIVASIVFGAVSTFVPLY), 239–259 (VSLGFANAGIFLTIQAIAVVA), 285–305 (LLVIASFVVAFGPQVGAIIFY), 309–329 (ILIGMTQAMVYPTLTSYLSFV), 337–357 (MLLGLFIACADLGISLGGALM), and 363–383 (LVGFKWMYLICGMLVIVIMIM).

Belongs to the major facilitator superfamily.

Its subcellular location is the cell membrane. In terms of biological role, involved in the export of the metallophore staphylopine. The polypeptide is Staphylopine export protein (Staphylococcus aureus (strain Mu50 / ATCC 700699)).